The chain runs to 199 residues: NAD(P)H dehydrogenase (quinone) (199 aa).

The region spanning 4–190 (VLVLYYSAYG…EAAKYQGAHV (187 aa)) is the Flavodoxin-like domain. Residues 10 to 15 (SAYGHI) and 78 to 80 (TRF) each bind FMN. An NAD(+)-binding site is contributed by Tyr12. Trp98 serves as a coordination point for substrate. FMN is bound by residues 113–119 (SSATQHG) and His134.

It belongs to the WrbA family. Requires FMN as cofactor.

The enzyme catalyses a quinone + NADH + H(+) = a quinol + NAD(+). The catalysed reaction is a quinone + NADPH + H(+) = a quinol + NADP(+). The sequence is that of NAD(P)H dehydrogenase (quinone) from Rhizobium rhizogenes (strain K84 / ATCC BAA-868) (Agrobacterium radiobacter).